Here is a 1088-residue protein sequence, read N- to C-terminus: MGKYNLILSEYLSFVYNSQSAVQIPIYYSSNSELETRCIEFHAKCVDNSKKGLSLKPLFEEYKDVTDNATLLSILSYSYDKYNAVERKLVSYAKGKPLEADLTANELDYENNKITSELFQSAEEYTDSLMDPAILTSLSSNLNAVMFWLERHSNDIADANKIYKRRLDLFTIVASTINKYGVPRHNEKYRYEYEVMKDKPYYLVTWANSSIEMLMSVFSHEDYLIAKELIVLSYSNRSTLAKLVSSPMSILVALIDINGTFITNEELELEFSDKYVKAIVPDQTFDELQEMINNMKKIGLVDIPRMIQEWLIDCSLEKFTLMSKIYSWSFHVGFRKQKMIDAALDQLKTEYTKDVDDEMYNEYTMLIRDEIVKMLEIPVKHDDHLLRDSELAGLLSMSSASNGESRQIKFGRKTIFSTKKNMHVMDDIAHGKYTPGVIPPVNVDKPIPLGRRDVPGRRTRIIFILPYEYFIAQHAVVEKMLLYAKHTREYAEFYSQSNQLLSYGDVTRFLSSNSMVLYTDVSQWDSSQHNTQPFRKGIIMGLDMLSNMTNDPKVVQALNLYKQTQINLMDSYVQIPDGNVIKKNQYGAVASGEKQTKAANSIANLALIKTVLSRIANKYSFITKIIRVSGDDNYAVLQFNTDLTKQMIQDVSNDVRYIYFRMNAKVKALVSTVGIEIAKRYLAGGKIFFRAGINLLNNEKRGQSTQWDQAAILYSNYIVNKLRGFETDREFILTKIIQMTSVAITGSLRLFPSERVLTTNSTFKVFDSEDFIIEYGTTDDEVYIQRAFMSLSSQKSGIADEIASSQTFKNYVSKLSDQLLVSKNVIVSKGIAVTEKAKLNSYAPIYLEKRRAQISALLTMLQKPVSFKSNKNTINEILRDIKPFFVTTEDNLPIQYRKFMPTLPDNVQYVIQCIGSRTYQIEDSGSKSSISKLISKYSVYKPSIEELYKVISLREQEIQLYLVSLGVPLVDASAYVASRIYSQDKYKILESYVYNLLSINYGCYQLFDFNSPDLEKLIRIPFKGKIPAVTFILHLYAKLEIINYAIKNRAWISVFCNYPKSEMIKLWKKMWSITALRSPYTSANFFQD.

The RdRp catalytic domain maps to 501-687 (LSYGDVTRFL…AKRYLAGGKI (187 aa)).

Belongs to the reoviridae RNA-directed RNA polymerase family. Interacts with VP3 (Potential). Interacts with VP2; this interaction activates VP1. Interacts with NSP5; this interaction is probably necessary for the formation of functional virus factories. Interacts with NSP2; this interaction is weak. Requires Mg(2+) as cofactor.

It localises to the virion. The catalysed reaction is RNA(n) + a ribonucleoside 5'-triphosphate = RNA(n+1) + diphosphate. RNA-directed RNA polymerase that is involved in both transcription and genome replication. Together with VP3 capping enzyme, forms an enzyme complex positioned near the channels situated at each of the five-fold vertices of the core. Following infection, the outermost layer of the virus is lost, leaving a double-layered particle (DLP) made up of the core and VP6 shell. VP1 then catalyzes the transcription of fully conservative plus-strand genomic RNAs that are extruded through the DLP's channels into the cytoplasm where they function as mRNAs for translation of viral proteins. One copy of each of the viral (+)RNAs is also recruited during core assembly, together with newly synthesized polymerase complexes and VP2. The polymerase of these novo-formed particles catalyzes the synthesis of complementary minus-strands leading to dsRNA formation. To do so, the polymerase specifically recognizes and binds 4 bases 5'-UGUG-3' in the conserved 3'-sequence of plus-strand RNA templates. VP2 presumably activates the autoinhibited VP1-RNA complex to coordinate packaging and genome replication. Once dsRNA synthesis is complete, the polymerase switches to the transcriptional mode, thus providing secondary transcription. The protein is RNA-directed RNA polymerase of Rotavirus A (strain RVA/Human/Japan/KU/1995/G1P1A[8]) (RV-A).